Reading from the N-terminus, the 398-residue chain is L-methionine gamma-lyase (398 aa).

Pyridoxal 5'-phosphate is bound by residues 59 to 61 and 89 to 90; these read YSR and GM. Tyr-114 contributes to the substrate binding site. 208–210 contacts pyridoxal 5'-phosphate; sequence SAT. At Lys-211 the chain carries N6-(pyridoxal phosphate)lysine. Arg-375 is a substrate binding site.

This sequence belongs to the trans-sulfuration enzymes family. L-methionine gamma-lyase subfamily. As to quaternary structure, homotetramer; dimer of active dimers. Pyridoxal 5'-phosphate is required as a cofactor.

The enzyme catalyses L-methionine + H2O = methanethiol + 2-oxobutanoate + NH4(+). It carries out the reaction L-homocysteine + H2O = 2-oxobutanoate + hydrogen sulfide + NH4(+) + H(+). With respect to regulation, irreversibly inactivated by DL-propargylglycine. Its function is as follows. Catalyzes the alpha,gamma-elimination of L-methionine to produce methanethiol, 2-oxobutanoate and ammonia. Is involved in L-methionine catabolism. In fact, shows a multicatalytic function since it also catalyzes gamma-replacement of L-methionine with thiol compounds, alpha,gamma-elimination and gamma-replacement reactions of L-homocysteine and its S-substituted derivatives, O-substituted-L-homoserines and DL-selenomethionine, and, to a lesser extent, alpha,beta-elimination and beta-replacement reactions of L-cysteine, S-methyl-L-cysteine, and O-acetyl-L-serine. Also catalyzes deamination and gamma-addition reactions of L-vinylglycine. Thus, the enzyme is able to cleave C-S, C-Se, and C-O bonds of sulfur, selenium, and oxygen amino acids, respectively. The sequence is that of L-methionine gamma-lyase from Pseudomonas putida (Arthrobacter siderocapsulatus).